The chain runs to 186 residues: MKSRLLFLGPPGAGKGTQAKLLCENQGLIHLSTGDLLRAEVNAQSPLGKEAALIMNKGELVSDEIVLSIVQKRLSADAKSGWLLDGFPRNLIQAQSLQQLLENVSQPIQAVLLIELDDETLIKRLLSRGRSDDTQEVIRHRLEVYREKTAPLVDFYQSLGILVKIQGEGDVKDVALTIRSALGLVM.

ATP is bound at residue glycine 12–threonine 17. Residues serine 32–valine 61 form an NMP region. AMP-binding positions include threonine 33, arginine 38, glutamate 59–valine 61, glycine 86–arginine 89, and glutamine 93. An LID region spans residues serine 127–aspartate 133. Arginine 128 contacts ATP. AMP contacts are provided by arginine 130 and arginine 141. Glycine 169 contributes to the ATP binding site.

The protein belongs to the adenylate kinase family. Monomer.

It is found in the cytoplasm. It carries out the reaction AMP + ATP = 2 ADP. Its pathway is purine metabolism; AMP biosynthesis via salvage pathway; AMP from ADP: step 1/1. Its function is as follows. Catalyzes the reversible transfer of the terminal phosphate group between ATP and AMP. Plays an important role in cellular energy homeostasis and in adenine nucleotide metabolism. This Prochlorococcus marinus (strain MIT 9211) protein is Adenylate kinase.